A 397-amino-acid polypeptide reads, in one-letter code: Acetate kinase 2 (397 aa).

Mg(2+) is bound at residue Asn10. Lys17 contributes to the ATP binding site. Arg90 contributes to the substrate binding site. The Proton donor/acceptor role is filled by Asp147. Residues 207–211 (HLGNG), 281–283 (DCR), and 329–333 (GIGEN) each bind ATP. Mg(2+) is bound at residue Glu383.

The protein belongs to the acetokinase family. In terms of assembly, homodimer. Mg(2+) is required as a cofactor. The cofactor is Mn(2+).

It localises to the cytoplasm. It catalyses the reaction acetate + ATP = acetyl phosphate + ADP. It functions in the pathway metabolic intermediate biosynthesis; acetyl-CoA biosynthesis; acetyl-CoA from acetate: step 1/2. Its function is as follows. Catalyzes the formation of acetyl phosphate from acetate and ATP. Can also catalyze the reverse reaction. This Photobacterium profundum (strain SS9) protein is Acetate kinase 2.